The primary structure comprises 209 residues: MEIRPTRIELIRTRRRIKLARKGLDLLKMKRSALIYEFLQISRTIRGMRENLRREVEDALNTIRTAEILEGQVALERIANMSSDSTINVDSRNVMGVVIPTLNLTYNLSILSDVYRTISVPVAINDAIDRFQRLFLNLIQILEKENALRNLLIEIDKTKRRSNAIENILIPRLEYQAKMIKMMLDERERDTFTTLKTIKKKIEAGKDEE.

Belongs to the V-ATPase D subunit family. In terms of assembly, has multiple subunits with at least A(3), B(3), C, D, E, F, H, I and proteolipid K(x).

It is found in the cell membrane. Its function is as follows. Component of the A-type ATP synthase that produces ATP from ADP in the presence of a proton gradient across the membrane. This is A-type ATP synthase subunit D from Thermoplasma volcanium (strain ATCC 51530 / DSM 4299 / JCM 9571 / NBRC 15438 / GSS1).